The following is a 174-amino-acid chain: 2-oxo-4-hydroxy-4-carboxy-5-ureidoimidazoline decarboxylase (174 aa).

Histidine 67 functions as the Proton donor in the catalytic mechanism. Substrate contacts are provided by residues proline 68, 84–88 (SQEEQ), and 119–123 (FVICA). The Microbody targeting signal motif lies at 172-174 (TKL).

It belongs to the OHCU decarboxylase family. In terms of assembly, homodimer.

The protein localises to the peroxisome. It carries out the reaction 5-hydroxy-2-oxo-4-ureido-2,5-dihydro-1H-imidazole-5-carboxylate + H(+) = (S)-allantoin + CO2. It participates in purine metabolism; urate degradation; (S)-allantoin from urate: step 3/3. Catalyzes the stereoselective decarboxylation of 2-oxo-4-hydroxy-4-carboxy-5-ureidoimidazoline (OHCU) to (S)-allantoin. This chain is 2-oxo-4-hydroxy-4-carboxy-5-ureidoimidazoline decarboxylase (urad), found in Danio rerio (Zebrafish).